The primary structure comprises 64 residues: Mitotic-spindle organizing protein 1 (64 aa).

This sequence belongs to the MOZART1 family. In terms of assembly, part of the gamma-tubulin complex. Interacts directly with alp6/GPC3.

The protein localises to the cytoplasm. It localises to the cytoskeleton. Its subcellular location is the microtubule organizing center. It is found in the spindle pole body. Functionally, required for gamma-tubulin complex recruitment to the microtubule organizing center (MTOC). This chain is Mitotic-spindle organizing protein 1 (mzt1), found in Schizosaccharomyces pombe (strain 972 / ATCC 24843) (Fission yeast).